Here is a 214-residue protein sequence, read N- to C-terminus: Urease accessory protein UreF (214 aa).

Positions 70-95 (AAAGEAGDAETDARTPSPAARAASRA) are disordered. The segment covering 83–95 (RTPSPAARAASRA) has biased composition (low complexity).

It belongs to the UreF family. In terms of assembly, ureD, UreF and UreG form a complex that acts as a GTP-hydrolysis-dependent molecular chaperone, activating the urease apoprotein by helping to assemble the nickel containing metallocenter of UreC. The UreE protein probably delivers the nickel.

It localises to the cytoplasm. In terms of biological role, required for maturation of urease via the functional incorporation of the urease nickel metallocenter. The sequence is that of Urease accessory protein UreF from Mycolicibacterium vanbaalenii (strain DSM 7251 / JCM 13017 / BCRC 16820 / KCTC 9966 / NRRL B-24157 / PYR-1) (Mycobacterium vanbaalenii).